The following is a 956-amino-acid chain: DNA polymerase I (956 aa).

A 5'-3' exonuclease domain is found at 209-296; the sequence is VTVRQWVDYR…VTDLPLDIEF (88 aa).

This sequence belongs to the DNA polymerase type-A family. As to quaternary structure, single-chain monomer with multiple functions.

It catalyses the reaction DNA(n) + a 2'-deoxyribonucleoside 5'-triphosphate = DNA(n+1) + diphosphate. A DNA polymerase, required for DNA repair after DNA damage induced by ionizing radiation (IR); this is not the major DNA polymerase. Following severe irradiation (7 kGy of gamma irradiation) genomic DNA is fragmented. DNA is progressively degraded for the first 1.5 hours after IR, in a step promoted by RecA and counterbalanced by DNA Pol I and Pol III, followed by massive DNA synthesis and genome reassembly in the next hour. Optimal priming of DNA synthesis requires both RecA and RadA, Pol III initiates DNA synthesis while both Pol I and Pol III are required for its continuation. May also have 5'-3' exonuclease activity. This chain is DNA polymerase I (polA), found in Deinococcus radiodurans (strain ATCC 13939 / DSM 20539 / JCM 16871 / CCUG 27074 / LMG 4051 / NBRC 15346 / NCIMB 9279 / VKM B-1422 / R1).